Reading from the N-terminus, the 132-residue chain is Small ribosomal subunit protein uS8 (132 aa).

The protein belongs to the universal ribosomal protein uS8 family. In terms of assembly, part of the 30S ribosomal subunit. Contacts proteins S5 and S12.

Functionally, one of the primary rRNA binding proteins, it binds directly to 16S rRNA central domain where it helps coordinate assembly of the platform of the 30S subunit. The sequence is that of Small ribosomal subunit protein uS8 from Bartonella bacilliformis (strain ATCC 35685 / KC583 / Herrer 020/F12,63).